Reading from the N-terminus, the 491-residue chain is Argininosuccinate lyase (491 aa).

This sequence belongs to the lyase 1 family. Argininosuccinate lyase subfamily.

The protein localises to the cytoplasm. It carries out the reaction 2-(N(omega)-L-arginino)succinate = fumarate + L-arginine. Its pathway is amino-acid biosynthesis; L-arginine biosynthesis; L-arginine from L-ornithine and carbamoyl phosphate: step 3/3. This Methanosarcina barkeri (strain Fusaro / DSM 804) protein is Argininosuccinate lyase.